Consider the following 326-residue polypeptide: (+)-T-muurolol synthase ((2E,6E)-farnesyl diphosphate cyclizing) (326 aa).

Residues Asp-81 and Asp-85 each contribute to the Mg(2+) site. A DDXXD motif motif is present at residues 81-85 (DDQCD). A substrate-binding site is contributed by Arg-175. Asn-221 and Ser-225 together coordinate Mg(2+). Lys-228 is a substrate binding site. Glu-229 serves as a coordination point for Mg(2+). A substrate-binding site is contributed by 309-310 (RY).

It belongs to the terpene synthase family. The cofactor is Mg(2+).

The enzyme catalyses (2E,6E)-farnesyl diphosphate + H2O = (+)-T-muurolol + diphosphate. It participates in secondary metabolite biosynthesis; terpenoid biosynthesis. In terms of biological role, catalyzes the conversion of (2E,6E)-farnesyl diphosphate (FPP) into (+)-T-muurolol via a 1,10-cyclization, which requires isomerization of FPP to nerolidyl diphosphate (NPP) and then abstraction of the pyrophosphate from intermediate NPP leading to a (E,Z)-germacradienyl (helminthogermacradienyl) cation. This Roseiflexus castenholzii (strain DSM 13941 / HLO8) protein is (+)-T-muurolol synthase ((2E,6E)-farnesyl diphosphate cyclizing).